The chain runs to 413 residues: Protein trichome birefringence-like 9 (413 aa).

A helical; Signal-anchor for type II membrane protein transmembrane segment spans residues 22–42 (LFVSLFLLSLLIFSTVVVDVM). The short motif at 141–143 (GDS) is the GDS motif element. The short motif at 384–398 (DCSHWCLPGVPDTWN) is the DCXHWCLPGXXDXWN motif element.

The protein belongs to the PC-esterase family. TBL subfamily.

The protein localises to the membrane. In terms of biological role, may act as a bridging protein that binds pectin and other cell wall polysaccharides. Probably involved in maintaining esterification of pectins. May be involved in the specific O-acetylation of cell wall polymers. This Arabidopsis thaliana (Mouse-ear cress) protein is Protein trichome birefringence-like 9 (TBL9).